The following is a 761-amino-acid chain: Semaphorin-4A (761 aa).

An N-terminal signal peptide occupies residues 1–32 (MALPALGLDPWSLLGLFLFQLLQLLLPTTTAG). The Extracellular segment spans residues 33–683 (GGGQGPMPRV…LAAQQSYWPH (651 aa)). The 459-residue stretch at 36 to 494 (QGPMPRVRYY…FSGGVWRVPR (459 aa)) folds into the Sema domain. Cys-113 and Cys-124 are joined by a disulfide. N-linked (GlcNAc...) asparagine glycans are attached at residues Asn-120 and Asn-135. 3 disulfides stabilise this stretch: Cys-142-Cys-151, Cys-269-Cys-379, and Cys-293-Cys-339. A glycan (N-linked (GlcNAc...) asparagine) is linked at Asn-496. The region spanning 496 to 548 (NCSVYESCVDCVLARDPHCAWDPESRTCCLLSAPNLNSWKQDMERGNPEWACA) is the PSI domain. Intrachain disulfides connect Cys-497–Cys-514, Cys-506–Cys-523, and Cys-580–Cys-624. The region spanning 573 to 631 (NSILELPCPHLSALASYYWSHGPAAVPEASSTVYNGSLLLIVQDGVGGLYQCWATENGF) is the Ig-like C2-type domain. Asn-607 carries an N-linked (GlcNAc...) asparagine glycan. Residues 684-704 (FVTVTVLFALVLSGALIILVA) traverse the membrane as a helical segment. At 705 to 761 (SPLRALRARGKVQGCETLRPGEKAPLSREQHLQSPKECRTSASDVDADNNCLGTEVA) the chain is on the cytoplasmic side. The interval 722 to 749 (LRPGEKAPLSREQHLQSPKECRTSASDV) is disordered. Residues 723–743 (RPGEKAPLSREQHLQSPKECR) are compositionally biased toward basic and acidic residues.

This sequence belongs to the semaphorin family. As to quaternary structure, interacts with PLXNB1, PLXNB2, PLXNB3, PLXND1 and TIMD2.

The protein resides in the cell membrane. Its function is as follows. Cell surface receptor for PLXNB1, PLXNB2, PLXNB3 and PLXND1 that plays an important role in cell-cell signaling. Regulates glutamatergic and GABAergic synapse development. Promotes the development of inhibitory synapses in a PLXNB1-dependent manner and promotes the development of excitatory synapses in a PLXNB2-dependent manner. Plays a role in priming antigen-specific T-cells, promotes differentiation of Th1 T-helper cells, and thereby contributes to adaptive immunity. Promotes phosphorylation of TIMD2. Inhibits angiogenesis. Promotes axon growth cone collapse. Inhibits axonal extension by providing local signals to specify territories inaccessible for growing axons. The polypeptide is Semaphorin-4A (SEMA4A) (Homo sapiens (Human)).